Reading from the N-terminus, the 208-residue chain is Superoxide dismutase [Mn] 2 (208 aa).

Residues His28, His83, Asp165, and His169 each coordinate Mn(2+).

This sequence belongs to the iron/manganese superoxide dismutase family. As to quaternary structure, homodimer. Mn(2+) is required as a cofactor.

It carries out the reaction 2 superoxide + 2 H(+) = H2O2 + O2. Functionally, destroys superoxide anion radicals which are normally produced within the cells and which are toxic to biological systems. This is Superoxide dismutase [Mn] 2 (sodA2) from Bacillus anthracis.